Consider the following 148-residue polypeptide: Large ribosomal subunit protein uL15 (148 aa).

Residues 1-12 are compositionally biased toward basic and acidic residues; that stretch reads MSDPIKLHDLRP. The disordered stretch occupies residues 1–45; that stretch reads MSDPIKLHDLRPAKGANKAKTRVGRGEASKGKTAGRGTKGTKARN.

This sequence belongs to the universal ribosomal protein uL15 family. In terms of assembly, part of the 50S ribosomal subunit.

Functionally, binds to the 23S rRNA. This chain is Large ribosomal subunit protein uL15, found in Corynebacterium urealyticum (strain ATCC 43042 / DSM 7109).